We begin with the raw amino-acid sequence, 500 residues long: Protein dcd1B (500 aa).

The signal sequence occupies residues 1–20; that stretch reads MNLIKLFIICCLLISITVKS. N-linked (GlcNAc...) asparagine glycans are attached at residues N284, N331, N441, N459, N474, and N475. Residues 464–500 form a disordered region; the sequence is FSEQPPLPPPNNSSSSDSNSNSNSDSSSSSDSNSNSN. A compositionally biased stretch (low complexity) spans 475–500; sequence NSSSSDSNSNSNSDSSSSSDSNSNSN.

The protein resides in the secreted. This is Protein dcd1B (dcd1B) from Dictyostelium discoideum (Social amoeba).